Reading from the N-terminus, the 205-residue chain is Rho-related GTP-binding protein RhoQ (205 aa).

GTP is bound at residue 16–23 (GDGAVGKT). The Effector region motif lies at 38 to 46 (YVPTVFDHY). GTP is bound by residues 63–67 (DTAGQ) and 121–124 (TQID). Position 202 is a cysteine methyl ester (Cys-202). The S-farnesyl cysteine moiety is linked to residue Cys-202. Positions 203-205 (LIT) are cleaved as a propeptide — removed in mature form.

This sequence belongs to the small GTPase superfamily. Rho family. In terms of assembly, interacts with CDC42EP4 in a GTP-dependent manner. Interacts with ARHGAP33/TCGAP. Interacts with CDC42EP1, CDC42EP2, CDC42EP3, PARD6A, PARD6G (and probably PARD6B) in a GTP-dependent manner. Part of a quaternary complex containing PARD3, some PARD6 protein (PARD6A, PARD6B or PARD6G) and some atypical PKC protein (PRKCI or PRKCZ). Interacts with EXO70 in a GTP-dependent manner. Interacts with GOPC. May be post-translationally modified by both palmitoylation and polyisoprenylation.

The protein localises to the cytoplasm. It localises to the cell membrane. With respect to regulation, regulated by guanine nucleotide exchange factors (GEFs) which promote the exchange of bound GDP for free GTP, GTPase activating proteins (GAPs) which increase the GTP hydrolysis activity, and GDP dissociation inhibitors which inhibit the dissociation of the nucleotide from the GTPase. Plasma membrane-associated small GTPase which cycles between an active GTP-bound and an inactive GDP-bound state. In active state binds to a variety of effector proteins to regulate cellular responses. Involved in epithelial cell polarization processes. May play a role in CFTR trafficking to the plasma membrane. Causes the formation of thin, actin-rich surface projections called filopodia. This is Rho-related GTP-binding protein RhoQ (RHOQ) from Homo sapiens (Human).